A 426-amino-acid chain; its full sequence is Serine--tRNA ligase (426 aa).

233-235 (TSE) serves as a coordination point for L-serine. 264-266 (RSE) is a binding site for ATP. Glu-287 contacts L-serine. Residue 351–354 (EISS) coordinates ATP. Ser-387 serves as a coordination point for L-serine.

This sequence belongs to the class-II aminoacyl-tRNA synthetase family. Type-1 seryl-tRNA synthetase subfamily. In terms of assembly, homodimer. The tRNA molecule binds across the dimer.

It localises to the cytoplasm. It carries out the reaction tRNA(Ser) + L-serine + ATP = L-seryl-tRNA(Ser) + AMP + diphosphate + H(+). The catalysed reaction is tRNA(Sec) + L-serine + ATP = L-seryl-tRNA(Sec) + AMP + diphosphate + H(+). It functions in the pathway aminoacyl-tRNA biosynthesis; selenocysteinyl-tRNA(Sec) biosynthesis; L-seryl-tRNA(Sec) from L-serine and tRNA(Sec): step 1/1. Catalyzes the attachment of serine to tRNA(Ser). Is also able to aminoacylate tRNA(Sec) with serine, to form the misacylated tRNA L-seryl-tRNA(Sec), which will be further converted into selenocysteinyl-tRNA(Sec). This chain is Serine--tRNA ligase, found in Xylella fastidiosa (strain M23).